The primary structure comprises 180 residues: uncharacterized protein (180 aa).

The signal sequence occupies residues 1-22 (MKLRFISSALAAALFAATGSYA). Cysteines 41 and 81 form a disulfide.

This sequence belongs to the fimbrial protein family.

The protein localises to the fimbrium. This is an uncharacterized protein from Escherichia coli O157:H7.